Consider the following 249-residue polypeptide: Segregation and condensation protein A (249 aa).

The protein belongs to the ScpA family. Component of a cohesin-like complex composed of ScpA, ScpB and the Smc homodimer, in which ScpA and ScpB bind to the head domain of Smc. The presence of the three proteins is required for the association of the complex with DNA.

It localises to the cytoplasm. Functionally, participates in chromosomal partition during cell division. May act via the formation of a condensin-like complex containing Smc and ScpB that pull DNA away from mid-cell into both cell halves. This Listeria welshimeri serovar 6b (strain ATCC 35897 / DSM 20650 / CCUG 15529 / CIP 8149 / NCTC 11857 / SLCC 5334 / V8) protein is Segregation and condensation protein A.